The chain runs to 943 residues: Aconitate hydratase A (943 aa).

Residues Cys479, Cys545, and Cys548 each contribute to the [4Fe-4S] cluster site.

The protein belongs to the aconitase/IPM isomerase family. Monomer. Requires [4Fe-4S] cluster as cofactor.

The catalysed reaction is citrate = D-threo-isocitrate. It carries out the reaction (2S,3R)-3-hydroxybutane-1,2,3-tricarboxylate = 2-methyl-cis-aconitate + H2O. Its pathway is carbohydrate metabolism; tricarboxylic acid cycle; isocitrate from oxaloacetate: step 2/2. The protein operates within organic acid metabolism; propanoate degradation. Its function is as follows. Involved in the catabolism of short chain fatty acids (SCFA) via the tricarboxylic acid (TCA)(acetyl degradation route) and probably via the 2-methylcitrate cycle I (propionate degradation route). Catalyzes the reversible isomerization of citrate to isocitrate via cis-aconitate. The apo form of AcnA functions as a RNA-binding regulatory protein which binds to selected IRE-like sequences present within the UTRs (untranslated regions) of 3' trxC and 5' IdeR mRNA. Could catalyze the hydration of 2-methyl-cis-aconitate to yield (2R,3S)-2-methylisocitrate. This chain is Aconitate hydratase A (acn), found in Mycobacterium tuberculosis (strain ATCC 25618 / H37Rv).